A 207-amino-acid chain; its full sequence is Ribonuclease HII (207 aa).

One can recognise an RNase H type-2 domain in the interval 12-201; sequence DLVAGVDEVG…VRAAWEAREG (190 aa). Residues Asp-18, Glu-19, and Asp-110 each contribute to the a divalent metal cation site.

The protein belongs to the RNase HII family. It depends on Mn(2+) as a cofactor. Mg(2+) is required as a cofactor.

It is found in the cytoplasm. It carries out the reaction Endonucleolytic cleavage to 5'-phosphomonoester.. Endonuclease that specifically degrades the RNA of RNA-DNA hybrids. This Pseudomonas putida (strain W619) protein is Ribonuclease HII.